A 1409-amino-acid polypeptide reads, in one-letter code: CRISPR-associated endonuclease Cas9 (1409 aa).

Asp-31 serves as the catalytic For RuvC-like nuclease domain. Asp-31, Glu-784, and Glu-788 together coordinate Mg(2+). Residues 792–949 (TNQGKSNSQQ…DKAGFIQRQL (158 aa)) form the HNH Cas9-type domain. His-868 serves as the catalytic Proton acceptor for HNH nuclease domain. His-1011 lines the Mg(2+) pocket. The segment covering 1121-1130 (EQNHGLDRGK) has biased composition (basic and acidic residues). A disordered region spans residues 1121 to 1151 (EQNHGLDRGKPKGLFNANLSSKPKPNSNENL). A compositionally biased stretch (polar residues) spans 1137-1150 (ANLSSKPKPNSNEN).

Belongs to the CRISPR-associated protein Cas9 family. Subtype II-A subfamily. As to quaternary structure, monomer. Binds crRNA and tracrRNA. The cofactor is Mg(2+).

With respect to regulation, only has nuclease activity when bound to both gRNAs (crRNA plus tracrRNA). In terms of biological role, CRISPR (clustered regularly interspaced short palindromic repeat) is an adaptive immune system that provides protection against mobile genetic elements (viruses, transposable elements and conjugative plasmids). CRISPR clusters contain spacers, sequences complementary to antecedent mobile elements, and target invading nucleic acids. CRISPR clusters are transcribed and processed into CRISPR RNA (crRNA). In type II CRISPR systems correct processing of pre-crRNA requires a trans-encoded small RNA (tracrRNA), endogenous ribonuclease 3 (rnc) and Cas9. The tracrRNA serves as a guide for ribonuclease 3-aided processing of pre-crRNA. Cas9/crRNA/tracrRNA endonucleolytically cleaves linear or circular dsDNA target complementary to the spacer yielding blunt ends; Cas9 is inactive in the absence of the 2 guide RNAs (gRNA). Cas9 recognizes a 3'-G-rich protospacer adjacent motif (PAM, TGGTG in this organism) in the CRISPR repeat sequences to help distinguish self versus nonself, as targets within the bacterial CRISPR locus do not have PAMs. PAM recognition is also required for catalytic activity. When the CRISPR3/cas system consisting of cas9-cas1-cas2-csn2-CRISPR3 or just cas9-CRISPR3 is expressed in E.coli it prevents plasmids homologous to spacers 1 or 2 from transforming. This chain is CRISPR-associated endonuclease Cas9, found in Streptococcus thermophilus.